Here is a 787-residue protein sequence, read N- to C-terminus: Ribonucleoside-diphosphate reductase large subunit (787 aa).

Residues T209, 224–225 (SC), G255, 436–440 (NLCTE), and 618–622 (PTVSS) each bind substrate. C225 and C453 are disulfide-bonded. The Proton acceptor role is filled by N436. Residue C438 is the Cysteine radical intermediate of the active site. Residue E440 is the Proton acceptor of the active site.

The protein belongs to the ribonucleoside diphosphate reductase large chain family. Heterotetramer composed of a homodimer of the large subunit (R1) and a homodimer of the small subunit (R2). Larger multisubunit protein complex are also active, composed of (R1)n(R2)n.

The enzyme catalyses a 2'-deoxyribonucleoside 5'-diphosphate + [thioredoxin]-disulfide + H2O = a ribonucleoside 5'-diphosphate + [thioredoxin]-dithiol. Its function is as follows. Ribonucleoside-diphosphate reductase holoenzyme provides the precursors necessary for viral DNA synthesis. Allows virus growth in non-dividing cells, as well as reactivation from latency in infected hosts. Catalyzes the biosynthesis of deoxyribonucleotides from the corresponding ribonucleotides. The sequence is that of Ribonucleoside-diphosphate reductase large subunit from Bos taurus (Bovine).